Reading from the N-terminus, the 347-residue chain is Membrane progestin receptor gamma-B (347 aa).

The Cytoplasmic portion of the chain corresponds to 1–52 (MLSLIKLQRVFNVHQVPKAFHEDGIISGYRHPRSSATECVWSLFQLTNETLN). The chain crosses the membrane as a helical span at residues 53-73 (VWTHFLPTWYFLWKLMTVLLM). Topologically, residues 74–81 (EDVWNEAY) are extracellular. The helical transmembrane segment at 82–102 (TWPLLVFLFSCCVYPLASSCA) threads the bilayer. Topologically, residues 103–114 (HTFSSMSTRARH) are cytoplasmic. Residues 115 to 135 (ICYFFDYGALSFYSLGSAISY) traverse the membrane as a helical segment. The Extracellular segment spans residues 136–138 (SAY). Residues 139 to 159 (VFPDAWLSSSFHAYYISVAVF) traverse the membrane as a helical segment. At 160–201 (NTVLSTSLACYSRLGLPLLHYSHDIVERFSERQCPRMSKVLR) the chain is on the cytoplasmic side. A helical membrane pass occupies residues 202–222 (ILAFAYPYLFDNIPLFYRLFV). The Extracellular portion of the chain corresponds to 223–235 (CVGEGCTDNEANS). Residues 236–256 (VHVQHTLLAFLTSFLFATHLP) form a helical membrane-spanning segment. At 257–314 (ERLAPGRFDYIGHSHQLFHVCAIIGTHFQMKAIEMDMGLRRSQLLASAPAISFNNTIG) the chain is on the cytoplasmic side. A helical membrane pass occupies residues 315–335 (AALLCVSVSLGIICVYSLPLL). At 336 to 347 (YSSNPKNTANKE) the chain is on the extracellular side.

It belongs to the ADIPOR family.

It is found in the membrane. Functionally, steroid membrane receptor. Binds progesterone. May be involved in oocyte maturation. This is Membrane progestin receptor gamma-B from Danio rerio (Zebrafish).